The sequence spans 327 residues: MGCASEIQAEIFTSFGQLFYASFQTILFLATIIGSLLAIFELCKKTTVPDSTRVLLIGSLFFANAHEFAYFTAPLKVFQLNIFNTNTSCYPLISTRDCIPTTTVLAMGISGNMLIQSALSIDRLLATIFPFSYSRMRALPGFVLLIMVLIPAMFTYSWIRLDIVLDDYQMFCSQWSANISTRANTFLEICSYLTVAHIIINCLIILRNRAIEKRCRFDVTQRYLTSENLKTTQAICYLSIAQFLAMFMYSGGVLLMRKNRENIPTLIYFNVIVWVYAPPYACVSLAPLILFSLWNLKKQRHIQIKSVQSAQKETQDDYIRKLQKSWK.

Topologically, residues 1–18 are extracellular; that stretch reads MGCASEIQAEIFTSFGQL. The helical transmembrane segment at 19–39 threads the bilayer; it reads FYASFQTILFLATIIGSLLAI. The Cytoplasmic portion of the chain corresponds to 40-53; sequence FELCKKTTVPDSTR. Residues 54-74 form a helical membrane-spanning segment; sequence VLLIGSLFFANAHEFAYFTAP. Residues 75–98 lie on the Extracellular side of the membrane; that stretch reads LKVFQLNIFNTNTSCYPLISTRDC. The helical transmembrane segment at 99 to 119 threads the bilayer; that stretch reads IPTTTVLAMGISGNMLIQSAL. The Cytoplasmic portion of the chain corresponds to 120 to 138; that stretch reads SIDRLLATIFPFSYSRMRA. A helical membrane pass occupies residues 139–159; that stretch reads LPGFVLLIMVLIPAMFTYSWI. At 160 to 185 the chain is on the extracellular side; that stretch reads RLDIVLDDYQMFCSQWSANISTRANT. Residues 186–206 traverse the membrane as a helical segment; that stretch reads FLEICSYLTVAHIIINCLIIL. Over 207–234 the chain is Cytoplasmic; that stretch reads RNRAIEKRCRFDVTQRYLTSENLKTTQA. A helical membrane pass occupies residues 235-255; that stretch reads ICYLSIAQFLAMFMYSGGVLL. Over 256–270 the chain is Extracellular; sequence MRKNRENIPTLIYFN. The chain crosses the membrane as a helical span at residues 271–291; that stretch reads VIVWVYAPPYACVSLAPLILF. Residues 292–327 are Cytoplasmic-facing; the sequence is SLWNLKKQRHIQIKSVQSAQKETQDDYIRKLQKSWK.

This sequence belongs to the nematode receptor-like protein sra family. Expressed in neurons RIF/RIG and PVT.

The protein resides in the membrane. The chain is Serpentine receptor class alpha-12 (sra-12) from Caenorhabditis elegans.